A 338-amino-acid polypeptide reads, in one-letter code: Citramalyl-CoA lyase, mitochondrial (338 aa).

A mitochondrion-targeting transit peptide spans 1-20 (MALCVLRNTVRGAAALPRLK). Tyr-48, Lys-55, and Lys-59 together coordinate substrate. Residues Lys-55, Lys-59, and Lys-64 each carry the N6-acetyllysine modification. N6-acetyllysine; alternate is present on residues Lys-80 and Lys-90. Lys-80 and Lys-90 each carry N6-succinyllysine; alternate. Arg-105 provides a ligand contact to substrate. Mg(2+) is bound by residues Glu-169 and Asp-204. Residue 270 to 271 (IH) participates in substrate binding. Lys-307 is modified (N6-succinyllysine). Residue Asp-318 is part of the active site.

It belongs to the HpcH/HpaI aldolase family. Citrate lyase beta subunit-like subfamily. Homotrimer. It depends on Mg(2+) as a cofactor. As to expression, detected in brown fat, brain, liver, kidney, heart, skeletal muscle and ovary (at protein level).

Its subcellular location is the mitochondrion. The enzyme catalyses glyoxylate + acetyl-CoA + H2O = (S)-malate + CoA + H(+). The catalysed reaction is propanoyl-CoA + glyoxylate + H2O = 3-methylmalate + CoA + H(+). It catalyses the reaction (3S)-citramalyl-CoA = pyruvate + acetyl-CoA. It carries out the reaction (S)-malyl-CoA + H2O = (S)-malate + CoA + H(+). In terms of biological role, mitochondrial citramalyl-CoA lyase indirectly involved in the vitamin B12 metabolism. Converts citramalyl-CoA into acetyl-CoA and pyruvate in the C5-dicarboxylate catabolism pathway. The C5-dicarboxylate catabolism pathway is required to detoxify itaconate, a vitamin B12-poisoning metabolite. Also acts as a malate synthase in vitro, converting glyoxylate and acetyl-CoA to malate. Also displays malyl-CoA thioesterase activity. Also acts as a beta-methylmalate synthase in vitro, by mediating conversion of glyoxylate and propionyl-CoA to beta-methylmalate. Also has very weak citramalate synthase activity in vitro. In Mus musculus (Mouse), this protein is Citramalyl-CoA lyase, mitochondrial.